A 161-amino-acid polypeptide reads, in one-letter code: EP300-interacting inhibitor of differentiation 2B (161 aa).

Disordered regions lie at residues 1–26 and 54–77; these read MAEP…GTAS and ARSM…GLAS.

Homodimer and heterodimer with EID2. Interacts with HDAC1 and HDAC2.

It is found in the nucleus. Its function is as follows. Acts as a repressor of MYOD-dependent transcription, glucocorticoid receptor-dependent transcription, and muscle differentiation. This is EP300-interacting inhibitor of differentiation 2B from Homo sapiens (Human).